Reading from the N-terminus, the 318-residue chain is Small ribosomal subunit protein RACK1 (318 aa).

WD repeat units lie at residues 11–44 (GHRG…LSWG), 65–95 (GHSA…RLWN), 107–137 (GHTK…RVWN), 150–182 (AHTD…KVWD), 194–224 (GHTN…RLWD), 235–264 (AAGA…RIFD), and 282–315 (KKIV…WGVS).

Belongs to the WD repeat G protein beta family. Ribosomal protein RACK1 subfamily.

The polypeptide is Small ribosomal subunit protein RACK1 (Trypanosoma brucei brucei).